A 238-amino-acid polypeptide reads, in one-letter code: MAWRRGFGREEEDAAAAGESGLELCLGLPAYFSSSSSSKPSEGSTAAPAFALRSNGTNASKPSGAAAAAPVVGWPPVRSFRRNLASSSSSSSKQAPPPPSSSPQNGDKASKDGGAEKGMFVKINMDGVPIGRKVDLAAYGGYAQLSAAVDKLFRGLLAAQSAAADGEADAAAAGEMVGGGEYTLVYEDDEGDRMLVGDVPWQMFIATAKRLRVLKSSDLPPPSLMRAAGSRKRAAADS.

The short motif at 24 to 28 (LCLGL) is the EAR-like (transcriptional repression) element. Low complexity-rich tracts occupy residues 33 to 44 (SSSSSSKPSEGS), 59 to 69 (ASKPSGAAAAA), and 85 to 94 (ASSSSSSSKQ). Disordered stretches follow at residues 33 to 69 (SSSS…AAAA) and 82 to 114 (RNLA…KDGG). Positions 118–216 (GMFVKINMDG…TAKRLRVLKS (99 aa)) constitute a PB1 domain. The interval 217–238 (SDLPPPSLMRAAGSRKRAAADS) is disordered. Basic residues predominate over residues 229 to 238 (GSRKRAAADS).

The protein belongs to the Aux/IAA family. As to quaternary structure, homodimers and heterodimers. As to expression, highly expressed in flowers.

The protein resides in the nucleus. In terms of biological role, aux/IAA proteins are short-lived transcriptional factors that function as repressors of early auxin response genes at low auxin concentrations. This chain is Auxin-responsive protein IAA2 (IAA2), found in Oryza sativa subsp. japonica (Rice).